The following is a 499-amino-acid chain: NAD(P)H-quinone oxidoreductase chain 4, chloroplastic (499 aa).

14 consecutive transmembrane segments (helical) span residues 4–24, 31–51, 87–107, 113–133, 134–154, 167–187, 211–231, 242–262, 274–294, 310–330, 331–351, 385–405, 416–436, and 462–482; these read FPWLTIIVLFPISAGLVIPFL, IIRWYTLGVCLLEFLLITYIF, IGLILLTGFITTLATLAAWPV, LFYFLMLAMYSGQIGLFASQD, ILLFFFMWELELLPVYLLLAM, FILYTAAGSLFILIGGLIMAF, IIIYLSFLIAYAVKLPIIPFH, HYSTCMLLAGILLKMGAYGLI, SFFAPWLVIVGAIQIVYAALT, VSHMGFVLIGIGSITNLGLNG, AILQMISHGLIGASLFFLAGI, SLALPGMSGFIAELMIFLGVI, IIIIIIQGIGIILTPIYLLSM, and IFILICLFFPIISIGIYPNFV.

The protein belongs to the complex I subunit 4 family.

It is found in the plastid. The protein resides in the chloroplast thylakoid membrane. It carries out the reaction a plastoquinone + NADH + (n+1) H(+)(in) = a plastoquinol + NAD(+) + n H(+)(out). The catalysed reaction is a plastoquinone + NADPH + (n+1) H(+)(in) = a plastoquinol + NADP(+) + n H(+)(out). The polypeptide is NAD(P)H-quinone oxidoreductase chain 4, chloroplastic (ndhD) (Marchantia polymorpha (Common liverwort)).